Here is a 461-residue protein sequence, read N- to C-terminus: Argininosuccinate lyase (461 aa).

Belongs to the lyase 1 family. Argininosuccinate lyase subfamily.

The protein localises to the cytoplasm. It carries out the reaction 2-(N(omega)-L-arginino)succinate = fumarate + L-arginine. It participates in amino-acid biosynthesis; L-arginine biosynthesis; L-arginine from L-ornithine and carbamoyl phosphate: step 3/3. This Laribacter hongkongensis (strain HLHK9) protein is Argininosuccinate lyase.